The primary structure comprises 316 residues: Vacuolar membrane protein YNL058C (316 aa).

The tract at residues 32–60 (KPTSSVVSETSSKSLPSLTSSAFSTSSGA) is disordered. Residues 93–113 (VYIAVGAVIGAIFISILIWWL) traverse the membrane as a helical segment. Phosphoserine is present on residues S148, S256, and S276. The tract at residues 240-304 (EEEERKLNLN…KAHKRQAPSM (65 aa)) is disordered. A compositionally biased stretch (basic and acidic residues) spans 256-271 (SPERKEKKINSMEGYH).

It belongs to the PRM5 family.

The protein localises to the vacuole membrane. The polypeptide is Vacuolar membrane protein YNL058C (Saccharomyces cerevisiae (strain ATCC 204508 / S288c) (Baker's yeast)).